The chain runs to 198 residues: Na(+)-translocating NADH-quinone reductase subunit E (198 aa).

6 helical membrane-spanning segments follow: residues 11 to 31 (SIFI…FLAV), 35 to 55 (VSTA…AVPA), 77 to 97 (FLNF…LEMI), 110 to 130 (GIFL…SFMV), 140 to 160 (VVYG…LAGI), and 176 to 196 (LGIT…FSGI).

Belongs to the NqrDE/RnfAE family. In terms of assembly, composed of six subunits; NqrA, NqrB, NqrC, NqrD, NqrE and NqrF.

It is found in the cell inner membrane. The catalysed reaction is a ubiquinone + n Na(+)(in) + NADH + H(+) = a ubiquinol + n Na(+)(out) + NAD(+). Functionally, NQR complex catalyzes the reduction of ubiquinone-1 to ubiquinol by two successive reactions, coupled with the transport of Na(+) ions from the cytoplasm to the periplasm. NqrA to NqrE are probably involved in the second step, the conversion of ubisemiquinone to ubiquinol. The protein is Na(+)-translocating NADH-quinone reductase subunit E of Glaesserella parasuis serovar 5 (strain SH0165) (Haemophilus parasuis).